A 283-amino-acid chain; its full sequence is Diaminopimelate epimerase (283 aa).

Substrate is bound by residues N13, Q45, and N65. C74 serves as the catalytic Proton donor. Residues 75–76, N156, N190, and 208–209 each bind substrate; these read GN and ER. C217 functions as the Proton acceptor in the catalytic mechanism. A substrate-binding site is contributed by 218–219; sequence GS.

This sequence belongs to the diaminopimelate epimerase family. In terms of assembly, homodimer.

It is found in the cytoplasm. It catalyses the reaction (2S,6S)-2,6-diaminopimelate = meso-2,6-diaminopimelate. It functions in the pathway amino-acid biosynthesis; L-lysine biosynthesis via DAP pathway; DL-2,6-diaminopimelate from LL-2,6-diaminopimelate: step 1/1. Functionally, catalyzes the stereoinversion of LL-2,6-diaminopimelate (L,L-DAP) to meso-diaminopimelate (meso-DAP), a precursor of L-lysine and an essential component of the bacterial peptidoglycan. In Bartonella tribocorum (strain CIP 105476 / IBS 506), this protein is Diaminopimelate epimerase.